The primary structure comprises 448 residues: Phosphoglucosamine mutase (448 aa).

The Phosphoserine intermediate role is filled by Ser100. Mg(2+) contacts are provided by Ser100, Asp240, Asp242, and Asp244. Phosphoserine is present on Ser100.

It belongs to the phosphohexose mutase family. The cofactor is Mg(2+). In terms of processing, activated by phosphorylation.

It carries out the reaction alpha-D-glucosamine 1-phosphate = D-glucosamine 6-phosphate. Functionally, catalyzes the conversion of glucosamine-6-phosphate to glucosamine-1-phosphate. The sequence is that of Phosphoglucosamine mutase from Clostridioides difficile (strain 630) (Peptoclostridium difficile).